A 170-amino-acid chain; its full sequence is UPF0690 protein C1orf52 homolog (170 aa).

Disordered regions lie at residues Met1 to Leu56 and Ser124 to Val170. Residues Asp46 to Leu56 show a composition bias toward basic and acidic residues. Acidic residues predominate over residues Glu144–Gln159.

This sequence belongs to the UPF0690 family.

The polypeptide is UPF0690 protein C1orf52 homolog (Xenopus tropicalis (Western clawed frog)).